A 510-amino-acid chain; its full sequence is Maturase K (510 aa).

This sequence belongs to the intron maturase 2 family. MatK subfamily.

It localises to the plastid. The protein localises to the chloroplast. In terms of biological role, usually encoded in the trnK tRNA gene intron. Probably assists in splicing its own and other chloroplast group II introns. The protein is Maturase K of Populus alba (White poplar).